The following is a 115-amino-acid chain: Yop proteins translocation protein M (115 aa).

The interval 19-38 (HGGQAGRLTETNPLTENSHQ) is disordered. A compositionally biased stretch (polar residues) spans 27-38 (TETNPLTENSHQ).

Belongs to an operon involved in the translocation of Yop proteins across the bacterial membranes or in the specific control of this function. This is Yop proteins translocation protein M (yscM) from Yersinia pestis.